The chain runs to 400 residues: Phosphoglycerate kinase (400 aa).

Substrate contacts are provided by residues 19-21 (DLN), Arg-38, 61-64 (HLGR), Arg-124, and Arg-161. ATP-binding positions include Lys-211, Gly-299, Glu-330, and 356-359 (GGDS).

The protein belongs to the phosphoglycerate kinase family. In terms of assembly, monomer.

The protein resides in the cytoplasm. The catalysed reaction is (2R)-3-phosphoglycerate + ATP = (2R)-3-phospho-glyceroyl phosphate + ADP. Its pathway is carbohydrate degradation; glycolysis; pyruvate from D-glyceraldehyde 3-phosphate: step 2/5. The chain is Phosphoglycerate kinase from Frankia casuarinae (strain DSM 45818 / CECT 9043 / HFP020203 / CcI3).